The primary structure comprises 519 residues: UPF0053 protein bbp_300 (519 aa).

The next 7 helical transmembrane spans lie at 13 to 35 (LLTL…AILS), 48 to 70 (LIGL…WMVT), 80 to 102 (YFSF…FKAT), 123 to 145 (AGFW…DAII), 150 to 172 (TINN…LIAS), 185 to 207 (VVVL…ALGF), and 212 to 231 (GYLY…NQIA). 2 consecutive CBS domains span residues 311 to 373 (MTPR…IIDF) and 374 to 434 (SSTT…DADE).

This sequence belongs to the UPF0053 family.

Its subcellular location is the cell membrane. In Buchnera aphidicola subsp. Baizongia pistaciae (strain Bp), this protein is UPF0053 protein bbp_300.